The chain runs to 838 residues: Urease (838 aa).

Positions 402-838 (GGFDTHIHFI…LPLTQDYFVY (437 aa)) constitute a Urease domain. 3 residues coordinate Ni(2+): His-407, His-409, and Lys-490. Lys-490 is modified (N6-carboxylysine). Substrate is bound at residue His-492. Ni(2+)-binding residues include His-519 and His-545. His-593 (proton donor) is an active-site residue. Asp-633 is a Ni(2+) binding site.

It in the C-terminal section; belongs to the metallo-dependent hydrolases superfamily. Urease alpha subunit family. As to quaternary structure, homohexamer. Requires Ni cation as cofactor. Post-translationally, carboxylation allows a single lysine to coordinate two nickel ions.

The enzyme catalyses urea + 2 H2O + H(+) = hydrogencarbonate + 2 NH4(+). The protein operates within nitrogen metabolism; urea degradation; CO(2) and NH(3) from urea (urease route): step 1/1. This chain is Urease (ure1), found in Aspergillus fumigatus (strain ATCC MYA-4609 / CBS 101355 / FGSC A1100 / Af293) (Neosartorya fumigata).